Consider the following 377-residue polypeptide: Probable pectin lyase D (377 aa).

An N-terminal signal peptide occupies residues 1-17 (MRVSAFALLAAAATAAA). Cystine bridges form between Cys80/Cys99 and Cys89/Cys223. Residue Asn126 is glycosylated (N-linked (GlcNAc...) asparagine). Residue Arg253 is part of the active site. A disulfide bond links Cys321 and Cys329.

It belongs to the polysaccharide lyase 1 family.

The protein resides in the secreted. It carries out the reaction Eliminative cleavage of (1-&gt;4)-alpha-D-galacturonan methyl ester to give oligosaccharides with 4-deoxy-6-O-methyl-alpha-D-galact-4-enuronosyl groups at their non-reducing ends.. Pectinolytic enzymes consist of four classes of enzymes: pectin lyase, polygalacturonase, pectin methylesterase and rhamnogalacturonase. Among pectinolytic enzymes, pectin lyase is the most important in depolymerization of pectin, since it cleaves internal glycosidic bonds of highly methylated pectins. The sequence is that of Probable pectin lyase D (pelD) from Emericella nidulans (strain FGSC A4 / ATCC 38163 / CBS 112.46 / NRRL 194 / M139) (Aspergillus nidulans).